Reading from the N-terminus, the 236-residue chain is MTKRYWNINLEEMMEAGVHFGHGTRKWNPRMAPYISAKRKGIHITNLTRTARFLSEACDLLFDAASGGKHFLIVGTKKKAADSVASAAIRARCHYVNKKWLGGMSTNWSTTETRLQNFRDLRAEQKAGKIDRLPKRDAAMLKRQLSTLQTYLGGIKYMTGLPDIVIIVDQQEDYTALRECVILGIPTICLIDTNSDPDLADISIPANDDAIASIRLILNKLVFAICEGRSSYIRNR.

The protein belongs to the universal ribosomal protein uS2 family.

Its subcellular location is the plastid. It is found in the chloroplast. The polypeptide is Small ribosomal subunit protein uS2c (rps2) (Acorus calamus var. americanus (American sweet flag)).